The chain runs to 257 residues: Pyridoxine 5'-phosphate synthase (257 aa).

Residue Asn-6 coordinates 3-amino-2-oxopropyl phosphate. Asp-8–His-9 is a binding site for 1-deoxy-D-xylulose 5-phosphate. Arg-17 provides a ligand contact to 3-amino-2-oxopropyl phosphate. The Proton acceptor role is filled by His-42. Residues Arg-44 and His-49 each coordinate 1-deoxy-D-xylulose 5-phosphate. The active-site Proton acceptor is the Glu-69. Thr-99 provides a ligand contact to 1-deoxy-D-xylulose 5-phosphate. His-211 functions as the Proton donor in the catalytic mechanism. 3-amino-2-oxopropyl phosphate is bound by residues Gly-212 and Gly-233–Gln-234.

The protein belongs to the PNP synthase family. As to quaternary structure, homooctamer; tetramer of dimers.

It localises to the cytoplasm. The enzyme catalyses 3-amino-2-oxopropyl phosphate + 1-deoxy-D-xylulose 5-phosphate = pyridoxine 5'-phosphate + phosphate + 2 H2O + H(+). It functions in the pathway cofactor biosynthesis; pyridoxine 5'-phosphate biosynthesis; pyridoxine 5'-phosphate from D-erythrose 4-phosphate: step 5/5. Catalyzes the complicated ring closure reaction between the two acyclic compounds 1-deoxy-D-xylulose-5-phosphate (DXP) and 3-amino-2-oxopropyl phosphate (1-amino-acetone-3-phosphate or AAP) to form pyridoxine 5'-phosphate (PNP) and inorganic phosphate. This Campylobacter hominis (strain ATCC BAA-381 / DSM 21671 / CCUG 45161 / LMG 19568 / NCTC 13146 / CH001A) protein is Pyridoxine 5'-phosphate synthase.